A 233-amino-acid chain; its full sequence is Protein Thf1 (233 aa).

A coiled-coil region spans residues 183-205; sequence DKLSKDLELYRSNLDKMTQALAV. The interval 213 to 233 is disordered; that stretch reads DRKKREQRQQQASTPVAPPNE.

Belongs to the THF1 family.

Its function is as follows. May be involved in photosynthetic membrane biogenesis. The polypeptide is Protein Thf1 (Trichormus variabilis (strain ATCC 29413 / PCC 7937) (Anabaena variabilis)).